Here is a 108-residue protein sequence, read N- to C-terminus: uncharacterized protein (108 aa).

The disordered stretch occupies residues 56–108 (ELPSRGCLPAPRPESGQGRLSTGISQNGGRSSAQPCPRCIAGESGHFSHTKNH). Polar residues predominate over residues 73-89 (GRLSTGISQNGGRSSAQ).

This is an uncharacterized protein from Homo sapiens (Human).